The following is a 326-amino-acid chain: Diaminopimelate epimerase (326 aa).

Residues Asn13 and Asn72 each contribute to the substrate site. Cys81 acts as the Proton donor in catalysis. Residues 82 to 83, Asn169, Asn205, and 223 to 224 each bind substrate; these read GN and ER. Cys232 (proton acceptor) is an active-site residue. 233-234 contacts substrate; that stretch reads GT.

The protein belongs to the diaminopimelate epimerase family. As to quaternary structure, homodimer.

It localises to the cytoplasm. The catalysed reaction is (2S,6S)-2,6-diaminopimelate = meso-2,6-diaminopimelate. It functions in the pathway amino-acid biosynthesis; L-lysine biosynthesis via DAP pathway; DL-2,6-diaminopimelate from LL-2,6-diaminopimelate: step 1/1. Its function is as follows. Catalyzes the stereoinversion of LL-2,6-diaminopimelate (L,L-DAP) to meso-diaminopimelate (meso-DAP), a precursor of L-lysine and an essential component of the bacterial peptidoglycan. The sequence is that of Diaminopimelate epimerase from Enterococcus faecalis (strain ATCC 700802 / V583).